We begin with the raw amino-acid sequence, 361 residues long: Chorismate synthase (361 aa).

Arg-48 lines the NADP(+) pocket. Residues 126 to 128, Gly-286, 301 to 305, and Arg-328 contribute to the FMN site; these read RFS and KPTPS.

Belongs to the chorismate synthase family. FMNH2 serves as cofactor.

The catalysed reaction is 5-O-(1-carboxyvinyl)-3-phosphoshikimate = chorismate + phosphate. It functions in the pathway metabolic intermediate biosynthesis; chorismate biosynthesis; chorismate from D-erythrose 4-phosphate and phosphoenolpyruvate: step 7/7. Functionally, catalyzes the anti-1,4-elimination of the C-3 phosphate and the C-6 proR hydrogen from 5-enolpyruvylshikimate-3-phosphate (EPSP) to yield chorismate, which is the branch point compound that serves as the starting substrate for the three terminal pathways of aromatic amino acid biosynthesis. This reaction introduces a second double bond into the aromatic ring system. This chain is Chorismate synthase, found in Korarchaeum cryptofilum (strain OPF8).